Consider the following 95-residue polypeptide: Acylphosphatase (95 aa).

The region spanning 6 to 94 (RVRVIVKGIV…EDFTGFSVRY (89 aa)) is the Acylphosphatase-like domain. Residues arginine 21 and asparagine 39 contribute to the active site.

This sequence belongs to the acylphosphatase family.

It catalyses the reaction an acyl phosphate + H2O = a carboxylate + phosphate + H(+). The chain is Acylphosphatase (acyP) from Caldivirga maquilingensis (strain ATCC 700844 / DSM 13496 / JCM 10307 / IC-167).